The sequence spans 192 residues: Elongation factor P (192 aa).

Belongs to the elongation factor P family.

It is found in the cytoplasm. The protein operates within protein biosynthesis; polypeptide chain elongation. Involved in peptide bond synthesis. Stimulates efficient translation and peptide-bond synthesis on native or reconstituted 70S ribosomes in vitro. Probably functions indirectly by altering the affinity of the ribosome for aminoacyl-tRNA, thus increasing their reactivity as acceptors for peptidyl transferase. This is Elongation factor P (efp) from Borreliella burgdorferi (strain ATCC 35210 / DSM 4680 / CIP 102532 / B31) (Borrelia burgdorferi).